The primary structure comprises 430 residues: Gamma-glutamyl phosphate reductase (430 aa).

The protein belongs to the gamma-glutamyl phosphate reductase family.

It is found in the cytoplasm. The enzyme catalyses L-glutamate 5-semialdehyde + phosphate + NADP(+) = L-glutamyl 5-phosphate + NADPH + H(+). The protein operates within amino-acid biosynthesis; L-proline biosynthesis; L-glutamate 5-semialdehyde from L-glutamate: step 2/2. Its function is as follows. Catalyzes the NADPH-dependent reduction of L-glutamate 5-phosphate into L-glutamate 5-semialdehyde and phosphate. The product spontaneously undergoes cyclization to form 1-pyrroline-5-carboxylate. The polypeptide is Gamma-glutamyl phosphate reductase (Rhodopseudomonas palustris (strain ATCC BAA-98 / CGA009)).